The sequence spans 146 residues: D-aminoacyl-tRNA deacylase (146 aa).

The short motif at 137–138 is the Gly-cisPro motif, important for rejection of L-amino acids element; that stretch reads GP.

This sequence belongs to the DTD family. In terms of assembly, homodimer.

The protein localises to the cytoplasm. It carries out the reaction glycyl-tRNA(Ala) + H2O = tRNA(Ala) + glycine + H(+). It catalyses the reaction a D-aminoacyl-tRNA + H2O = a tRNA + a D-alpha-amino acid + H(+). Functionally, an aminoacyl-tRNA editing enzyme that deacylates mischarged D-aminoacyl-tRNAs. Also deacylates mischarged glycyl-tRNA(Ala), protecting cells against glycine mischarging by AlaRS. Acts via tRNA-based rather than protein-based catalysis; rejects L-amino acids rather than detecting D-amino acids in the active site. By recycling D-aminoacyl-tRNA to D-amino acids and free tRNA molecules, this enzyme counteracts the toxicity associated with the formation of D-aminoacyl-tRNA entities in vivo and helps enforce protein L-homochirality. The chain is D-aminoacyl-tRNA deacylase from Acinetobacter baylyi (strain ATCC 33305 / BD413 / ADP1).